Here is a 417-residue protein sequence, read N- to C-terminus: NADH-quinone oxidoreductase subunit D (417 aa).

Belongs to the complex I 49 kDa subunit family. In terms of assembly, NDH-1 is composed of 14 different subunits. Subunits NuoB, C, D, E, F, and G constitute the peripheral sector of the complex.

Its subcellular location is the cell inner membrane. The catalysed reaction is a quinone + NADH + 5 H(+)(in) = a quinol + NAD(+) + 4 H(+)(out). NDH-1 shuttles electrons from NADH, via FMN and iron-sulfur (Fe-S) centers, to quinones in the respiratory chain. The immediate electron acceptor for the enzyme in this species is believed to be ubiquinone. Couples the redox reaction to proton translocation (for every two electrons transferred, four hydrogen ions are translocated across the cytoplasmic membrane), and thus conserves the redox energy in a proton gradient. This Nitrosospira multiformis (strain ATCC 25196 / NCIMB 11849 / C 71) protein is NADH-quinone oxidoreductase subunit D.